The chain runs to 49 residues: MAVPKRRVSHSRSAKRRTHYKITLAKPVKDKDGTYKLPHHINPTTGEYK.

The tract at residues 25-49 (AKPVKDKDGTYKLPHHINPTTGEYK) is disordered.

The protein belongs to the bacterial ribosomal protein bL32 family.

This is Large ribosomal subunit protein bL32 from Sulfurimonas denitrificans (strain ATCC 33889 / DSM 1251) (Thiomicrospira denitrificans (strain ATCC 33889 / DSM 1251)).